The chain runs to 154 residues: uncharacterized protein (154 aa).

The HTH marR-type domain occupies 7 to 143 (RSELEKTAVQ…IFSFVGKAAD (137 aa)). The H-T-H motif DNA-binding region spans 57-80 (AGELGKKTGLSTGSVTALVDRLEK).

This is an uncharacterized protein from Bacillus subtilis (strain 168).